The sequence spans 205 residues: Iron-sulfur assembly protein 2 (205 aa).

The Fe cation site is built by C131, C196, and C198.

This sequence belongs to the HesB/IscA family.

The protein localises to the mitochondrion matrix. Functionally, involved in the assembly of mitochondrial and cytoplasmic iron-sulfur proteins. Probably involved in the binding of an intermediate of Fe/S cluster assembly. This is Iron-sulfur assembly protein 2 (isa2) from Schizosaccharomyces pombe (strain 972 / ATCC 24843) (Fission yeast).